Consider the following 123-residue polypeptide: Large ribosomal subunit protein uL14 (123 aa).

The protein belongs to the universal ribosomal protein uL14 family. Part of the 50S ribosomal subunit. Forms a cluster with proteins L3 and L19. In the 70S ribosome, L14 and L19 interact and together make contacts with the 16S rRNA in bridges B5 and B8.

Its function is as follows. Binds to 23S rRNA. Forms part of two intersubunit bridges in the 70S ribosome. This is Large ribosomal subunit protein uL14 from Zymomonas mobilis subsp. mobilis (strain ATCC 31821 / ZM4 / CP4).